The sequence spans 271 residues: Aquaporin-2 (271 aa).

The Cytoplasmic portion of the chain corresponds to 1–11; it reads MWELRSIAFSR. A helical transmembrane segment spans residues 12–32; the sequence is AVLAEFLATLLFVFFGLGSAL. Residues 33-40 lie on the Extracellular side of the membrane; it reads NWPQALPS. Residues 41–59 traverse the membrane as a helical segment; it reads VLQIAMAFGLAIGTLVQAL. The Cytoplasmic segment spans residues 60-64; the sequence is GHVSG. Positions 65–74 form an intramembrane region, discontinuously helical; the sequence is AHINPAVTVA. An NPA 1 motif is present at residues 68-70; that stretch reads NPA. Residues 75-85 lie on the Cytoplasmic side of the membrane; it reads CLVGCHVSFLR. The chain crosses the membrane as a helical span at residues 86–107; it reads AVFYVAAQLLGAVAGAALLHEI. Residues 108-127 lie on the Extracellular side of the membrane; sequence TPPAIRGDLAVNALNNNSTA. Asn-123 carries N-linked (GlcNAc...) asparagine glycosylation. Residues 128-148 traverse the membrane as a helical segment; that stretch reads GQAVTVELFLTLQLVLCIFAS. At 149–156 the chain is on the cytoplasmic side; that stretch reads TDERRGDN. The chain crosses the membrane as a helical span at residues 157-176; it reads VGTPALSIGFSVALGHLLGI. The Extracellular segment spans residues 177–180; the sequence is HYTG. Positions 181–193 form an intramembrane region, discontinuously helical; that stretch reads CSMNPARSLAPAI. Residues 184 to 186 carry the NPA 2 motif; it reads NPA. The Extracellular segment spans residues 194–201; it reads VTGKFDDH. Residues 202 to 222 traverse the membrane as a helical segment; that stretch reads WVFWIGPLVGAIVASLLYNYV. Over 223-271 the chain is Cytoplasmic; sequence LFPPAKSLSERLAVLKGLEPDTDWEEREVRRRQSVELHSPQSLPRGSKA. Residues 251–271 form a disordered region; that stretch reads VRRRQSVELHSPQSLPRGSKA. Ser-256 is modified (phosphoserine). The span at 261–271 shows a compositional bias: polar residues; sequence SPQSLPRGSKA.

The protein belongs to the MIP/aquaporin (TC 1.A.8) family. Homotetramer. Post-translationally, ser-256 phosphorylation is necessary and sufficient for expression at the apical membrane. Endocytosis is not phosphorylation-dependent. N-glycosylated.

The protein resides in the apical cell membrane. The protein localises to the basolateral cell membrane. It is found in the cell membrane. Its subcellular location is the cytoplasmic vesicle membrane. It localises to the golgi apparatus. The protein resides in the trans-Golgi network membrane. It carries out the reaction H2O(in) = H2O(out). The catalysed reaction is glycerol(in) = glycerol(out). Forms a water-specific channel that provides the plasma membranes of renal collecting duct with high permeability to water, thereby permitting water to move in the direction of an osmotic gradient. Could also be permeable to glycerol. In Bos taurus (Bovine), this protein is Aquaporin-2.